A 90-amino-acid polypeptide reads, in one-letter code: Cell division topological specificity factor (90 aa).

The protein belongs to the MinE family.

Functionally, prevents the cell division inhibition by proteins MinC and MinD at internal division sites while permitting inhibition at polar sites. This ensures cell division at the proper site by restricting the formation of a division septum at the midpoint of the long axis of the cell. This chain is Cell division topological specificity factor, found in Clostridium perfringens (strain SM101 / Type A).